A 279-amino-acid polypeptide reads, in one-letter code: Shikimate dehydrogenase (NADP(+)) (279 aa).

Residues 16-18 (SRS) and Thr-63 contribute to the shikimate site. Residue Lys-67 is the Proton acceptor of the active site. Residues Asn-88 and Asp-103 each coordinate shikimate. NADP(+) contacts are provided by residues 128-132 (GAGGA) and Met-219. Tyr-221 contributes to the shikimate binding site. Gly-243 serves as a coordination point for NADP(+).

This sequence belongs to the shikimate dehydrogenase family. As to quaternary structure, homodimer.

It carries out the reaction shikimate + NADP(+) = 3-dehydroshikimate + NADPH + H(+). It functions in the pathway metabolic intermediate biosynthesis; chorismate biosynthesis; chorismate from D-erythrose 4-phosphate and phosphoenolpyruvate: step 4/7. Involved in the biosynthesis of the chorismate, which leads to the biosynthesis of aromatic amino acids. Catalyzes the reversible NADPH linked reduction of 3-dehydroshikimate (DHSA) to yield shikimate (SA). This chain is Shikimate dehydrogenase (NADP(+)), found in Aromatoleum aromaticum (strain DSM 19018 / LMG 30748 / EbN1) (Azoarcus sp. (strain EbN1)).